Consider the following 329-residue polypeptide: GDP-mannose transporter (329 aa).

The Cytoplasmic portion of the chain corresponds to 1–11; sequence MADKGSVAAKS. Residues 12–32 form a helical membrane-spanning segment; it reads LTNSAPLSIFSYCAASILMTV. The Lumenal portion of the chain corresponds to 33-40; it reads TNKYAVSG. A helical membrane pass occupies residues 41 to 61; the sequence is VDFNFNFFLLAVQGIVCITLI. Residues 62-83 are Cytoplasmic-facing; the sequence is SSLKQLNVITFREFNKVEAKKW. A helical membrane pass occupies residues 84–104; the sequence is FPIAVLLVVMIYTSSKALQYL. Over 105 to 107 the chain is Lumenal; the sequence is SIP. A helical membrane pass occupies residues 108-128; the sequence is IYTIFKNLTIILIAYGEVIWF. At 129–131 the chain is on the cytoplasmic side; that stretch reads GGR. Residues 132–152 traverse the membrane as a helical segment; sequence VTNLALGSFVLMVLSSAVASY. Residues 153–163 lie on the Lumenal side of the membrane; sequence GDSNVDTGKLN. Residues 164-184 traverse the membrane as a helical segment; it reads FNIGYFWMFTNCFSSAAFVLF. Residues 185–196 are Cytoplasmic-facing; the sequence is MRKRIKLTNFKD. A helical membrane pass occupies residues 197–217; sequence FDTMYYNNLLSIPILLFASLT. Residues 218–237 lie on the Lumenal side of the membrane; that stretch reads TEDWSAKNIAQNFPEDTKYA. A helical transmembrane segment spans residues 238-258; it reads VIASMIISGMSAVGISYTSAW. The Cytoplasmic segment spans residues 259 to 266; that stretch reads CVRVTSST. Residues 267–287 traverse the membrane as a helical segment; the sequence is TYSMVGALNKLPIALSGLLFF. The Lumenal segment spans residues 288-290; sequence KAP. Residues 291 to 311 form a helical membrane-spanning segment; the sequence is INFYSISSIFIGFAAGLVYAI. Residues 312-329 are Cytoplasmic-facing; sequence AKQKQKKEDELQLPTDKS.

The protein belongs to the TPT transporter family. SLC35D subfamily. As to quaternary structure, homooligomer.

It localises to the golgi apparatus membrane. The protein localises to the cytoplasmic vesicle membrane. Its subcellular location is the endoplasmic reticulum membrane. Functionally, involved in the import of GDP-mannose from the cytoplasm into the Golgi lumen. This is GDP-mannose transporter (VIG4) from Komagataella pastoris (Yeast).